The primary structure comprises 213 residues: Glycerol-3-phosphate acyltransferase (213 aa).

6 helical membrane-spanning segments follow: residues 2 to 22 (ITIV…GLWI), 52 to 74 (AGMA…PIIF), 81 to 100 (PLIF…FAGF), 112 to 132 (VIFG…FGAL), 143 to 163 (VTAS…GFIL), and 164 to 184 (SNYD…IIIR).

The protein belongs to the PlsY family. In terms of assembly, probably interacts with PlsX.

The protein localises to the cell membrane. It catalyses the reaction an acyl phosphate + sn-glycerol 3-phosphate = a 1-acyl-sn-glycero-3-phosphate + phosphate. It participates in lipid metabolism; phospholipid metabolism. Catalyzes the transfer of an acyl group from acyl-phosphate (acyl-PO(4)) to glycerol-3-phosphate (G3P) to form lysophosphatidic acid (LPA). This enzyme utilizes acyl-phosphate as fatty acyl donor, but not acyl-CoA or acyl-ACP. The protein is Glycerol-3-phosphate acyltransferase of Streptococcus pneumoniae (strain Hungary19A-6).